A 689-amino-acid chain; its full sequence is Methionine--tRNA ligase (689 aa).

The short motif at 15 to 25 (PYANGPIHLGH) is the 'HIGH' region element. Zn(2+) contacts are provided by cysteine 146, cysteine 149, cysteine 159, and cysteine 162. Positions 332-336 (KMSKS) match the 'KMSKS' region motif. Residue lysine 335 coordinates ATP. Residues 546–577 (KDNLQPTEAPKADKKADKKVEKKATTGDPLTD) form a disordered region. Positions 555–570 (PKADKKADKKVEKKAT) are enriched in basic and acidic residues. One can recognise a tRNA-binding domain in the interval 588-689 (DFAKLDLRIA…QGAKPGMRVK (102 aa)).

The protein belongs to the class-I aminoacyl-tRNA synthetase family. MetG type 1 subfamily. As to quaternary structure, homodimer. Zn(2+) is required as a cofactor.

The protein resides in the cytoplasm. The enzyme catalyses tRNA(Met) + L-methionine + ATP = L-methionyl-tRNA(Met) + AMP + diphosphate. Its function is as follows. Is required not only for elongation of protein synthesis but also for the initiation of all mRNA translation through initiator tRNA(fMet) aminoacylation. The chain is Methionine--tRNA ligase from Shewanella denitrificans (strain OS217 / ATCC BAA-1090 / DSM 15013).